The following is a 418-amino-acid chain: Elongation factor Tu, chloroplastic (418 aa).

The region spanning 10 to 214 (KPHVNIGTIG…NVDSYIPTPQ (205 aa)) is the tr-type G domain. The interval 19–26 (GHVDHGKT) is G1. Residue 19–26 (GHVDHGKT) coordinates GTP. Threonine 26 provides a ligand contact to Mg(2+). The segment at 60-64 (GITIN) is G2. Positions 81 to 84 (DCPG) are G3. Residues 81–85 (DCPGH) and 136–139 (NKED) contribute to the GTP site. The G4 stretch occupies residues 136 to 139 (NKED). Residues 174–176 (SAL) form a G5 region.

The protein belongs to the TRAFAC class translation factor GTPase superfamily. Classic translation factor GTPase family. EF-Tu/EF-1A subfamily.

It is found in the plastid. The protein resides in the chloroplast. It catalyses the reaction GTP + H2O = GDP + phosphate + H(+). Its function is as follows. GTP hydrolase that promotes the GTP-dependent binding of aminoacyl-tRNA to the A-site of ribosomes during protein biosynthesis. In Chlamydomonas reinhardtii (Chlamydomonas smithii), this protein is Elongation factor Tu, chloroplastic (tufA).